A 699-amino-acid polypeptide reads, in one-letter code: Protein Scribble homolog let-413 (699 aa).

LRR repeat units follow at residues 37-59 (KLED…FSLR), 60-81 (HLRI…IGNL), 83-104 (QLIE…MQNC), 106-127 (LLTT…ICEC), 129-150 (SITI…IGSL), 152-174 (NLRV…VELR), 175-196 (KLEE…IGKL), 198-219 (SLRE…ISGC), 221-242 (MLDQ…LGRM), 244-265 (NLTD…FGEL), 267-288 (RLQM…IGKC), 290-311 (SLTE…IGDL), 313-334 (QLTT…IGNC), 336-357 (SLTV…IGKC), 359-380 (NLTV…VKVL), and 382-403 (KLQA…SETR). A PDZ domain is found at 584–665 (AGGTSNDPAP…RSPSPVSRTS (82 aa)). The segment at 656 to 699 (RSPSPVSRTSEPSLNGSSHQLNHFDAGSPDSTMFVTSSTPVYAS) is disordered. Composition is skewed to polar residues over residues 659–676 (SPVS…SHQL) and 684–699 (PDST…VYAS).

Belongs to the LAP (LRR and PDZ) protein family. Expressed in the terminal web of the intestine. Expressed in seam cells. Expressed in the basolateral surfaces of epithelia and the nervous system. Expressed in the intestine, epidermis, excretory canal, reproductive system including vulva, uterus and spermatheca, in both larval and adult stage animals.

Its subcellular location is the basolateral cell membrane. Critical role in assembling adherens junctions; adapter protein involved in polarizing protein trafficking in epithelial cells. Necessary to maintain, not establish, the entire terminal web (organelle-depleted, intermediate filament-rich layer of cytoplasm that underlies the apical microvilli of polarized epithelial cells) or brush border assembly at the apical surface gut cells. Required for correct localization of ifb-2 intermediate filaments in the terminal web. Required for dlg-1 and hmr-1 lateral localization. Maintains cell polarity by correctly positioning adherens junction protein components including ajm-1 and hmp-1 at discrete subapical positions. Plays a role in the correct localization of the dlg-1-ajm-1 complex, polarity protein par-3, and actin microfilament to the apical junction of spermatheca cells, and is required for ovulation. Regulates the establishment of newly-formed epithelia in conjunction with dlg-1. Required in the epidermis during larval development. Plays a role in cellular junction integrity and in the directed outgrowth of seam cells, towards neighboring seam cells, during larval development; probably acts by promoting the assembly and stability of dlg-1 at apical junctions. This Caenorhabditis elegans protein is Protein Scribble homolog let-413.